Here is a 736-residue protein sequence, read N- to C-terminus: Cytosolic neutral trehalase (736 aa).

The tract at residues 1-47 (MSEAPQARRVGSVDDHSVYDDAKTYYTSEERHNNSRSGPRQRTYSQN) is disordered. Residues 11–33 (GSVDDHSVYDDAKTYYTSEERHN) are compositionally biased toward basic and acidic residues. Residues 35 to 47 (SRSGPRQRTYSQN) are compositionally biased toward polar residues. Positions 92, 94, 96, 98, and 103 each coordinate Ca(2+). Residues Arg-279, 286–287 (WD), Asn-323, 332–334 (RSQ), Glu-399, Arg-448, and Gly-451 contribute to the substrate site. Active-site proton donor/acceptor residues include Asp-453 and Glu-657.

Belongs to the glycosyl hydrolase 37 family. Requires Ca(2+) as cofactor.

Its subcellular location is the cytoplasm. It carries out the reaction alpha,alpha-trehalose + H2O = alpha-D-glucose + beta-D-glucose. It participates in carbohydrate degradation. Hydrolyzes intracellular trehalose to glucose. Plays a role in pathogenicity, specifically in proliferation of invasive hyphae in rice blast disease. The chain is Cytosolic neutral trehalase (NTH1) from Pyricularia oryzae (strain 70-15 / ATCC MYA-4617 / FGSC 8958) (Rice blast fungus).